Reading from the N-terminus, the 301-residue chain is Golgi to ER traffic protein 2 (301 aa).

Topologically, residues Met-1–Leu-167 are cytoplasmic. Residues Ser-42–Val-55 are compositionally biased toward low complexity. The tract at residues Ser-42–Pro-93 is disordered. The span at Leu-56–Asp-67 shows a compositional bias: basic and acidic residues. A helical transmembrane segment spans residues Trp-168 to Tyr-188. Over Thr-189–Asp-214 the chain is Lumenal. The helical transmembrane segment at Phe-215–Phe-234 threads the bilayer. The Cytoplasmic portion of the chain corresponds to His-235–Glu-278. A helical membrane pass occupies residues Leu-279–Phe-299. The Lumenal portion of the chain corresponds to Ala-300–Asn-301.

The protein belongs to the GET2 family. In terms of assembly, component of the Golgi to ER traffic (GET) complex, which is composed of GET1, GET2 and GET3. Within the complex, GET1 and GET2 form a heterotetramer which is stabilized by phosphatidylinositol binding and which binds to the GET3 homodimer.

Its subcellular location is the endoplasmic reticulum membrane. The protein localises to the golgi apparatus membrane. Required for the post-translational delivery of tail-anchored (TA) proteins to the endoplasmic reticulum. Together with GET1, acts as a membrane receptor for soluble GET3, which recognizes and selectively binds the transmembrane domain of TA proteins in the cytosol. The GET complex cooperates with the HDEL receptor ERD2 to mediate the ATP-dependent retrieval of resident ER proteins that contain a C-terminal H-D-E-L retention signal from the Golgi to the ER. The polypeptide is Golgi to ER traffic protein 2 (Candida dubliniensis (strain CD36 / ATCC MYA-646 / CBS 7987 / NCPF 3949 / NRRL Y-17841) (Yeast)).